The chain runs to 271 residues: 5-deoxy-glucuronate isomerase (271 aa).

It belongs to the isomerase IolB family.

It carries out the reaction 5-deoxy-D-glucuronate = 5-dehydro-2-deoxy-D-gluconate. Its pathway is polyol metabolism; myo-inositol degradation into acetyl-CoA; acetyl-CoA from myo-inositol: step 4/7. Involved in the isomerization of 5-deoxy-glucuronate (5DG) to 5-dehydro-2-deoxy-D-gluconate (DKG or 2-deoxy-5-keto-D-gluconate). This Shouchella clausii (strain KSM-K16) (Alkalihalobacillus clausii) protein is 5-deoxy-glucuronate isomerase.